The primary structure comprises 148 residues: NADPH-dependent 7-cyano-7-deazaguanine reductase (148 aa).

Cysteine 50 acts as the Thioimide intermediate in catalysis. The active-site Proton donor is aspartate 57. Residues 72-74 (VES) and 91-92 (HE) each bind substrate.

This sequence belongs to the GTP cyclohydrolase I family. QueF type 1 subfamily.

The protein resides in the cytoplasm. It carries out the reaction 7-aminomethyl-7-carbaguanine + 2 NADP(+) = 7-cyano-7-deazaguanine + 2 NADPH + 3 H(+). Its pathway is tRNA modification; tRNA-queuosine biosynthesis. Catalyzes the NADPH-dependent reduction of 7-cyano-7-deazaguanine (preQ0) to 7-aminomethyl-7-deazaguanine (preQ1). This chain is NADPH-dependent 7-cyano-7-deazaguanine reductase, found in Helicobacter pylori (strain ATCC 700392 / 26695) (Campylobacter pylori).